A 201-amino-acid polypeptide reads, in one-letter code: Holliday junction branch migration complex subunit RuvA (201 aa).

The domain I stretch occupies residues 1–63 (MIAYLSGVVR…EDAQLLFGFP (63 aa)). The tract at residues 64 to 142 (DADHLKLFDL…EHLAAAASGA (79 aa)) is domain II. Positions 143–150 (AGGKRPAR) are flexible linker. The segment at 151 to 201 (VSSTAGHDAVDALLALGFREAQVRAAVAELLGADPEASADTLIRKALGRLR) is domain III.

This sequence belongs to the RuvA family. As to quaternary structure, homotetramer. Forms an RuvA(8)-RuvB(12)-Holliday junction (HJ) complex. HJ DNA is sandwiched between 2 RuvA tetramers; dsDNA enters through RuvA and exits via RuvB. An RuvB hexamer assembles on each DNA strand where it exits the tetramer. Each RuvB hexamer is contacted by two RuvA subunits (via domain III) on 2 adjacent RuvB subunits; this complex drives branch migration. In the full resolvosome a probable DNA-RuvA(4)-RuvB(12)-RuvC(2) complex forms which resolves the HJ.

It localises to the cytoplasm. Its function is as follows. The RuvA-RuvB-RuvC complex processes Holliday junction (HJ) DNA during genetic recombination and DNA repair, while the RuvA-RuvB complex plays an important role in the rescue of blocked DNA replication forks via replication fork reversal (RFR). RuvA specifically binds to HJ cruciform DNA, conferring on it an open structure. The RuvB hexamer acts as an ATP-dependent pump, pulling dsDNA into and through the RuvAB complex. HJ branch migration allows RuvC to scan DNA until it finds its consensus sequence, where it cleaves and resolves the cruciform DNA. This Deinococcus radiodurans (strain ATCC 13939 / DSM 20539 / JCM 16871 / CCUG 27074 / LMG 4051 / NBRC 15346 / NCIMB 9279 / VKM B-1422 / R1) protein is Holliday junction branch migration complex subunit RuvA.